Consider the following 242-residue polypeptide: 3-dehydroquinate dehydratase (242 aa).

Residues 39 to 41 (EVR) and Arg73 contribute to the 3-dehydroquinate site. His135 (proton donor/acceptor) is an active-site residue. Catalysis depends on Lys162, which acts as the Schiff-base intermediate with substrate. Residues Arg203 and Gln228 each contribute to the 3-dehydroquinate site.

This sequence belongs to the type-I 3-dehydroquinase family. Homodimer.

The enzyme catalyses 3-dehydroquinate = 3-dehydroshikimate + H2O. Its pathway is metabolic intermediate biosynthesis; chorismate biosynthesis; chorismate from D-erythrose 4-phosphate and phosphoenolpyruvate: step 3/7. Functionally, involved in the third step of the chorismate pathway, which leads to the biosynthesis of aromatic amino acids. Catalyzes the cis-dehydration of 3-dehydroquinate (DHQ) and introduces the first double bond of the aromatic ring to yield 3-dehydroshikimate. This Methanosarcina acetivorans (strain ATCC 35395 / DSM 2834 / JCM 12185 / C2A) protein is 3-dehydroquinate dehydratase.